Consider the following 66-residue polypeptide: uncharacterized protein (66 aa).

This is an uncharacterized protein from Human cytomegalovirus (strain AD169) (HHV-5).